Here is a 627-residue protein sequence, read N- to C-terminus: (+)-sabinene synthase, chloroplastic (627 aa).

The transit peptide at 1–46 directs the protein to the chloroplast; the sequence is MSVISIVPLASNSCLYKSLMSSTHELKALCRPIATLGMCRRGKSVM. Residues Asp378, Asp382, and Asp530 each contribute to the Mg(2+) site. The short motif at 378-382 is the DDXXD motif element; that stretch reads DDIYD.

It belongs to the terpene synthase family. Tpsd subfamily. Monomer. Requires Mg(2+) as cofactor.

It localises to the plastid. The protein localises to the chloroplast. The enzyme catalyses (2E)-geranyl diphosphate = (1R,5R)-sabinene + diphosphate. It functions in the pathway terpene metabolism; oleoresin biosynthesis. Terpene synthase (TPS) involved in defensive oleoresin formation in conifers in response to insect attack (e.g. white pine weevil P.strobi) or other injury. Produces (+)-sabinene from geranyl diphosphate, but has no activity with geranylgeranyl diphosphate or farnesyl diphosphate. The polypeptide is (+)-sabinene synthase, chloroplastic (TPS-sab) (Picea sitchensis (Sitka spruce)).